Consider the following 498-residue polypeptide: ATP synthase subunit beta, chloroplastic (498 aa).

172–179 contacts ATP; that stretch reads GGAGVGKT.

This sequence belongs to the ATPase alpha/beta chains family. F-type ATPases have 2 components, CF(1) - the catalytic core - and CF(0) - the membrane proton channel. CF(1) has five subunits: alpha(3), beta(3), gamma(1), delta(1), epsilon(1). CF(0) has four main subunits: a(1), b(1), b'(1) and c(9-12).

It is found in the plastid. It localises to the chloroplast thylakoid membrane. The enzyme catalyses ATP + H2O + 4 H(+)(in) = ADP + phosphate + 5 H(+)(out). Produces ATP from ADP in the presence of a proton gradient across the membrane. The catalytic sites are hosted primarily by the beta subunits. The chain is ATP synthase subunit beta, chloroplastic from Populus tremuloides (Quaking aspen).